The chain runs to 121 residues: Large ribosomal subunit protein uL18 (121 aa).

Positions 1 to 25 (MKIVISKPDKNKIRQKRHRRVRGKL) are disordered. The segment covering 13-23 (IRQKRHRRVRG) has biased composition (basic residues).

Belongs to the universal ribosomal protein uL18 family. Part of the 50S ribosomal subunit; part of the 5S rRNA/L5/L18/L25 subcomplex. Contacts the 5S and 23S rRNAs.

Its function is as follows. This is one of the proteins that bind and probably mediate the attachment of the 5S RNA into the large ribosomal subunit, where it forms part of the central protuberance. This is Large ribosomal subunit protein uL18 from Streptococcus pyogenes serotype M28 (strain MGAS6180).